Here is a 514-residue protein sequence, read N- to C-terminus: Putative selenium-binding protein (514 aa).

The protein belongs to the selenium-binding protein family.

In Caenorhabditis briggsae, this protein is Putative selenium-binding protein.